The chain runs to 198 residues: Segregation and condensation protein B (198 aa).

The interval 169-198 (LADPAAEEPDQNEMDLFFDRFNQSKEQEEE) is disordered.

This sequence belongs to the ScpB family. In terms of assembly, homodimer. Homodimerization may be required to stabilize the binding of ScpA to the Smc head domains. Component of a cohesin-like complex composed of ScpA, ScpB and the Smc homodimer, in which ScpA and ScpB bind to the head domain of Smc. The presence of the three proteins is required for the association of the complex with DNA.

The protein resides in the cytoplasm. Participates in chromosomal partition during cell division. May act via the formation of a condensin-like complex containing Smc and ScpA that pull DNA away from mid-cell into both cell halves. This chain is Segregation and condensation protein B, found in Listeria monocytogenes serotype 4a (strain HCC23).